We begin with the raw amino-acid sequence, 86 residues long: Exodeoxyribonuclease 7 small subunit (86 aa).

Residues M1–S26 are disordered.

The protein belongs to the XseB family. As to quaternary structure, heterooligomer composed of large and small subunits.

It localises to the cytoplasm. The catalysed reaction is Exonucleolytic cleavage in either 5'- to 3'- or 3'- to 5'-direction to yield nucleoside 5'-phosphates.. Bidirectionally degrades single-stranded DNA into large acid-insoluble oligonucleotides, which are then degraded further into small acid-soluble oligonucleotides. In Helicobacter pylori (strain Shi470), this protein is Exodeoxyribonuclease 7 small subunit.